Reading from the N-terminus, the 652-residue chain is Aorsin (652 aa).

Residues 1 to 22 form the signal peptide; that stretch reads MRPLSHLSFFNGLLLGLSALSA. Positions 23–215 are cleaved as a propeptide — removed in mature form; that stretch reads ATSVVHERRE…PRPIQQHDVK (193 aa). N112 carries an N-linked (GlcNAc...) asparagine glycan. The segment at 177-211 is disordered; sequence VNLNPSSGKPSSIRRRAAASKKTKLPARGPRPIQQ. Over residues 188 to 201 the composition is skewed to basic residues; it reads SIRRRAAASKKTKL. N-linked (GlcNAc...) asparagine glycans are attached at residues N218 and N247. The Peptidase S53 domain maps to 225-651; the sequence is LITPECIRAL…PKMLKLWLDL (427 aa). Active-site charge relay system residues include E301 and D305. N331 and N445 each carry an N-linked (GlcNAc...) asparagine glycan. S569 functions as the Charge relay system in the catalytic mechanism. Ca(2+) is bound by residues D610 and I611. N613 carries an N-linked (GlcNAc...) asparagine glycan. Ca(2+) contacts are provided by G629 and D631.

Requires Ca(2+) as cofactor. N-glycosylated. Post-translationally, O-glycosylated.

Its subcellular location is the secreted. The protein resides in the extracellular space. Its activity is regulated as follows. Inhibited by antipain and leupeptin. Functionally, serine endopeptidase which hydrolyzes a range of fluorogenic peptide substrates containing the basic residues arginine or lysine at the P1 position and prefers paired basic resides. Also hydrolyzes clupeine and salmine, activates plasminogen and converts trypsinogen to trypsin. This chain is Aorsin, found in Aspergillus oryzae (strain ATCC 42149 / RIB 40) (Yellow koji mold).